A 410-amino-acid polypeptide reads, in one-letter code: Platelet-activating factor acetylhydrolase IB subunit beta (410 aa).

Residues 1–38 form a required for self-association and interaction with PAFAH1B2 and PAFAH1B3 region; it reads MVLSQRQRDELNRAIADYLRSNGYEEAYSVFKKEAELD. Residues 1–66 are interaction with NDE1; the sequence is MVLSQRQRDE…SVIRLQKKVM (66 aa). The interaction with NDEL1 stretch occupies residues 1-102; it reads MVLSQRQRDE…EWIPRPPEKY (102 aa). Residues 7 to 39 enclose the LisH domain; that stretch reads QRDELNRAIADYLRSNGYEEAYSVFKKEAELDV. Residue Lys-53 is modified to N6-acetyllysine. Residues 56–82 adopt a coiled-coil conformation; the sequence is TSVIRLQKKVMELESKLNEAKEEFTSG. An interaction with dynein and dynactin region spans residues 83 to 410; the sequence is GPLGQKRDPK…DQTVKVWECR (328 aa). WD repeat units lie at residues 106-147, 148-187, 190-229, 232-271, 274-333, 336-377, and 378-410; these read GHRS…RTLK, GHTD…CIRT, GHDH…CVKT, GHRE…CKAE, EHEH…CLMT, GHDN…KTLN, and AHEH…WECR. Ser-109 is subject to Phosphoserine. Positions 367-409 are interaction with DCX; the sequence is YKNKRCMKTLNAHEHFVTSLDFHKTAPYVVTGSVDQTVKVWEC. The tract at residues 388-410 is interaction with NDEL1; the sequence is FHKTAPYVVTGSVDQTVKVWECR.

The protein belongs to the WD repeat LIS1/nudF family. Component of the cytosolic PAF-AH (I) heterotetrameric enzyme, which is composed of PAFAH1B1 (beta), PAFAH1B2 (alpha2) and PAFAH1B3 (alpha1) subunits. The catalytic activity of the enzyme resides in the alpha1 (PAFAH1B3) and alpha2 (PAFAH1B2) subunits, whereas the beta subunit (PAFAH1B1) has regulatory activity. Trimer formation is not essential for the catalytic activity. Interacts with the catalytic dimer of PAF-AH (I) heterotetrameric enzyme: interacts with PAFAH1B2 homodimer (alpha2/alpha2 homodimer), PAFAH1B3 homodimer (alpha1/alpha1 homodimer) and PAFAH1B2-PAFAH1B3 heterodimer (alpha2/alpha1 heterodimer). Interacts with IQGAP1, KATNB1 and NUDC. Interacts with DAB1 when DAB1 is phosphorylated in response to RELN/reelin signaling. Can self-associate. Interacts with DCX, dynein, dynactin, NDE1, NDEL1 and RSN. Interacts with DISC1, and this interaction is enhanced by NDEL1. Interacts with INTS13. Interacts with DCDC1. In terms of tissue distribution, fairly ubiquitous expression in both the frontal and occipital areas of the brain.

Its subcellular location is the cytoplasm. It localises to the cytoskeleton. It is found in the microtubule organizing center. The protein resides in the centrosome. The protein localises to the spindle. Its subcellular location is the nucleus membrane. Its function is as follows. Regulatory subunit (beta subunit) of the cytosolic type I platelet-activating factor (PAF) acetylhydrolase (PAF-AH (I)), an enzyme that catalyzes the hydrolyze of the acetyl group at the sn-2 position of PAF and its analogs and participates in PAF inactivation. Regulates the PAF-AH (I) activity in a catalytic dimer composition-dependent manner. Required for proper activation of Rho GTPases and actin polymerization at the leading edge of locomoting cerebellar neurons and postmigratory hippocampal neurons in response to calcium influx triggered via NMDA receptors. Positively regulates the activity of the minus-end directed microtubule motor protein dynein. May enhance dynein-mediated microtubule sliding by targeting dynein to the microtubule plus end. Required for several dynein- and microtubule-dependent processes such as the maintenance of Golgi integrity, the peripheral transport of microtubule fragments and the coupling of the nucleus and centrosome. Required during brain development for the proliferation of neuronal precursors and the migration of newly formed neurons from the ventricular/subventricular zone toward the cortical plate. Neuronal migration involves a process called nucleokinesis, whereby migrating cells extend an anterior process into which the nucleus subsequently translocates. During nucleokinesis dynein at the nuclear surface may translocate the nucleus towards the centrosome by exerting force on centrosomal microtubules. May also play a role in other forms of cell locomotion including the migration of fibroblasts during wound healing. Required for dynein recruitment to microtubule plus ends and BICD2-bound cargos. May modulate the Reelin pathway through interaction of the PAF-AH (I) catalytic dimer with VLDLR. This chain is Platelet-activating factor acetylhydrolase IB subunit beta, found in Homo sapiens (Human).